Reading from the N-terminus, the 290-residue chain is Nucleotide-binding protein Sde_3181 (290 aa).

8–15 (GRSGSGKT) contacts ATP. 60–63 (DARN) contributes to the GTP binding site.

It belongs to the RapZ-like family.

In terms of biological role, displays ATPase and GTPase activities. In Saccharophagus degradans (strain 2-40 / ATCC 43961 / DSM 17024), this protein is Nucleotide-binding protein Sde_3181.